A 156-amino-acid chain; its full sequence is MPRRREVPKREVLPDPKYGNVDVAKFMNMLMLSGKKSVAERIVYGAFEQIQTKGGKDPLEVFTVALNNVKPVVEVKSRRVGGANYQVPVEVRPSRRMALAMRWLREAAKKRSEKSMALRLAGELSEAAEGRGGAMKKRDEVHRMAEANRAFSHFRF.

This sequence belongs to the universal ribosomal protein uS7 family. Part of the 30S ribosomal subunit. Contacts proteins S9 and S11.

Its function is as follows. One of the primary rRNA binding proteins, it binds directly to 16S rRNA where it nucleates assembly of the head domain of the 30S subunit. Is located at the subunit interface close to the decoding center, probably blocks exit of the E-site tRNA. The chain is Small ribosomal subunit protein uS7 from Burkholderia multivorans (strain ATCC 17616 / 249).